A 334-amino-acid chain; its full sequence is Phospho-N-acetylmuramoyl-pentapeptide-transferase (334 aa).

Helical transmembrane passes span 5 to 25 (VVWL…PVTI), 52 to 72 (PTMG…VLLV), 81 to 101 (GLVV…DDFI), 116 to 136 (KILG…FKLG), 148 to 168 (GISF…VLLG), 181 to 200 (GLAS…LALV), 230 to 250 (VFMG…GAVV), 256 to 276 (LLVV…IQVI), and 309 to 329 (FWLL…DFWL).

It belongs to the glycosyltransferase 4 family. MraY subfamily. The cofactor is Mg(2+).

Its subcellular location is the cell membrane. It catalyses the reaction UDP-N-acetyl-alpha-D-muramoyl-L-alanyl-gamma-D-glutamyl-meso-2,6-diaminopimeloyl-D-alanyl-D-alanine + di-trans,octa-cis-undecaprenyl phosphate = di-trans,octa-cis-undecaprenyl diphospho-N-acetyl-alpha-D-muramoyl-L-alanyl-D-glutamyl-meso-2,6-diaminopimeloyl-D-alanyl-D-alanine + UMP. It participates in cell wall biogenesis; peptidoglycan biosynthesis. In terms of biological role, catalyzes the initial step of the lipid cycle reactions in the biosynthesis of the cell wall peptidoglycan: transfers peptidoglycan precursor phospho-MurNAc-pentapeptide from UDP-MurNAc-pentapeptide onto the lipid carrier undecaprenyl phosphate, yielding undecaprenyl-pyrophosphoryl-MurNAc-pentapeptide, known as lipid I. The sequence is that of Phospho-N-acetylmuramoyl-pentapeptide-transferase from Desulforamulus reducens (strain ATCC BAA-1160 / DSM 100696 / MI-1) (Desulfotomaculum reducens).